The chain runs to 470 residues: Argininosuccinate lyase (470 aa).

It belongs to the lyase 1 family. Argininosuccinate lyase subfamily.

It localises to the cytoplasm. It catalyses the reaction 2-(N(omega)-L-arginino)succinate = fumarate + L-arginine. The protein operates within amino-acid biosynthesis; L-arginine biosynthesis; L-arginine from L-ornithine and carbamoyl phosphate: step 3/3. The polypeptide is Argininosuccinate lyase (Mycobacterium tuberculosis (strain CDC 1551 / Oshkosh)).